Here is a 112-residue protein sequence, read N- to C-terminus: UPF0145 protein LAF_1635 (112 aa).

Belongs to the UPF0145 family.

This is UPF0145 protein LAF_1635 from Limosilactobacillus fermentum (strain NBRC 3956 / LMG 18251) (Lactobacillus fermentum).